Here is an 84-residue protein sequence, read N- to C-terminus: Magnetosome protein MamR (84 aa).

The protein belongs to the magnetosome MamR family.

Its subcellular location is the magnetosome. Its function is as follows. May play a role in controlling magnetite number and size but not in control of magnetite morphology. In Paramagnetospirillum magneticum (strain ATCC 700264 / AMB-1) (Magnetospirillum magneticum), this protein is Magnetosome protein MamR.